Consider the following 338-residue polypeptide: Phenylalanine--tRNA ligase alpha subunit (338 aa).

Mg(2+) is bound at residue E253.

This sequence belongs to the class-II aminoacyl-tRNA synthetase family. Phe-tRNA synthetase alpha subunit type 1 subfamily. As to quaternary structure, tetramer of two alpha and two beta subunits. It depends on Mg(2+) as a cofactor.

It localises to the cytoplasm. The enzyme catalyses tRNA(Phe) + L-phenylalanine + ATP = L-phenylalanyl-tRNA(Phe) + AMP + diphosphate + H(+). The chain is Phenylalanine--tRNA ligase alpha subunit from Pelobacter propionicus (strain DSM 2379 / NBRC 103807 / OttBd1).